The sequence spans 181 residues: Cell division protein SepF (181 aa).

The segment covering 18 to 27 has biased composition (acidic residues); sequence EDYLDDDDYD. A disordered region spans residues 18–42; the sequence is EDYLDDDDYDDGRAVGHDDRRAMHE. The span at 28-42 shows a compositional bias: basic and acidic residues; sequence DGRAVGHDDRRAMHE.

Belongs to the SepF family. As to quaternary structure, homodimer. Interacts with FtsZ.

The protein resides in the cytoplasm. Its function is as follows. Cell division protein that is part of the divisome complex and is recruited early to the Z-ring. Probably stimulates Z-ring formation, perhaps through the cross-linking of FtsZ protofilaments. Its function overlaps with FtsA. The sequence is that of Cell division protein SepF from Frankia alni (strain DSM 45986 / CECT 9034 / ACN14a).